The following is a 213-amino-acid chain: Ras-related protein RabK1 (213 aa).

14 to 21 (GDRMVGKL) is a GTP binding site. The Effector region motif lies at 36 to 43 (GNSIPFDF). Residues 61–65 (NTHGS) and 119–122 (TKSD) contribute to the GTP site.

This sequence belongs to the small GTPase superfamily. Rab family.

The chain is Ras-related protein RabK1 (rabK1) from Dictyostelium discoideum (Social amoeba).